Here is a 526-residue protein sequence, read N- to C-terminus: MQQSTIGAVYSNFLGQAPDWYKKSIIAFLIFNPILFMADPYIAGWALVLEFIFTLAMALKCYPLQPGGLLLIEALFIGMTSPEHMKHEIVVNIEVVLLLVFMVAGIYFMKDMLLFMFTKLLLKLKNKIALSMSFVAASAFLSAFLDALTVVAVIIAVGMGFYSIYHKVASGKEFHSDHDHTSDDHVDHPKRQDLEDFRAFLRNLMMHAAVGTALGGVMTMVGEPQNLIIADKASWNFGEFFVRMSPVTIPVFFAGIATTFALEKFKIFSYGAQLPQVVRDILTAHSHQQEATRTKQDSAKLWIQGFIGIWLVIGLAGHFAAVGLIGLSIIVLATSMNGIIDEHSIGKAFEEALPFTALLCVFFGVVAVIIDQGLFTPVIDWVLTFEGRSQLVMFYLANGALSMVSDNVFVGSVYITEVAAALEHGHITRDEFDMLAVAINTGTNLPSVATPNGQAAFLFLLTSAIAPLLRLSYGTMVYMALPYTIVLTIVGLAATYFGLGDLTNWLYDMHLIEHHSATLGAEAAAH.

The next 11 helical transmembrane spans lie at 25–45 (IIAF…IAGW), 52–72 (IFTL…LLLI), 89–109 (IVVN…IYFM), 139–159 (AFLS…AVGM), 204–224 (LMMH…VGEP), 240–260 (FFVR…ATTF), 305–325 (GFIG…VGLI), 355–375 (FTAL…QGLF), 391–411 (LVMF…VFVG), 448–468 (VATP…IAPL), and 479–499 (MALP…YFGL).

Belongs to the NhaB Na(+)/H(+) (TC 2.A.34) antiporter family.

It localises to the cell inner membrane. The enzyme catalyses 2 Na(+)(in) + 3 H(+)(out) = 2 Na(+)(out) + 3 H(+)(in). Functionally, na(+)/H(+) antiporter that extrudes sodium in exchange for external protons. This chain is Na(+)/H(+) antiporter NhaB, found in Pseudoalteromonas atlantica (strain T6c / ATCC BAA-1087).